A 546-amino-acid polypeptide reads, in one-letter code: NADH-ubiquinone oxidoreductase chain 5 (546 aa).

16 consecutive transmembrane segments (helical) span residues 1-21, 31-51, 52-72, 82-102, 112-132, 135-155, 175-195, 198-218, 237-257, 264-284, 291-310, 321-341, 358-378, 387-407, 440-460, and 468-488; these read MFLL…SPIA, IIAI…YYEV, VFMG…VGTF, LLTA…HMYA, LNLF…LVAA, LLVM…LIGY, VSDG…GSLE, LLNV…GAMG, TPVS…YLLV, EMFV…FGAT, VIAY…LGLG, LMTH…VISG, AMFT…WPEL, ILNL…TLLL, VLPI…VWVG, and LFFL…AGIL.

The protein belongs to the complex I subunit 5 family.

It localises to the mitochondrion inner membrane. It carries out the reaction a ubiquinone + NADH + 5 H(+)(in) = a ubiquinol + NAD(+) + 4 H(+)(out). In terms of biological role, core subunit of the mitochondrial membrane respiratory chain NADH dehydrogenase (Complex I) that is believed to belong to the minimal assembly required for catalysis. Complex I functions in the transfer of electrons from NADH to the respiratory chain. The immediate electron acceptor for the enzyme is believed to be ubiquinone. This is NADH-ubiquinone oxidoreductase chain 5 (ND5) from Chlamydomonas reinhardtii (Chlamydomonas smithii).